Here is a 339-residue protein sequence, read N- to C-terminus: Annexin A2 (339 aa).

The residue at position 2 (serine 2) is an N-acetylserine. Residues 2 to 24 (STVHEILCKLSLEGDHSTPPSAY) form an S100A10-binding site region. At tyrosine 24 the chain carries Phosphotyrosine; by SRC. Residue serine 26 is modified to Phosphoserine; by PKC. Annexin repeat units lie at residues 33-104 (FDAE…GLLK) and 105-176 (TPAQ…ALAK). N6-acetyllysine; alternate is present on lysine 49. Lysine 49 participates in a covalent cross-link: Glycyl lysine isopeptide (Lys-Gly) (interchain with G-Cter in SUMO1); alternate. Lysine 49 is covalently cross-linked (Glycyl lysine isopeptide (Lys-Gly) (interchain with G-Cter in SUMO2); alternate). Position 152 is an N6-acetyllysine (lysine 152). Serine 184 is subject to Phosphoserine. Annexin repeat units lie at residues 189–261 (ELID…NLVQ) and 265–336 (NKPL…YLCG). At tyrosine 199 the chain carries Phosphotyrosine. Lysine 227 is subject to N6-acetyllysine.

It belongs to the annexin family. As to quaternary structure, heterotetramer containing 2 light chains of S100A10/p11 and 2 heavy chains of ANXA2/p36. Interacts with ATP1B1. Interacts with DYSF. Interacts with COCH. Interacts (via repeat Annexin 1) with PCSK9 (via the C-terminal domain); the interaction inhibits the degradation of LDLR. Interacts with CEACAM1 (via the cytoplasmic domain); this interaction is regulated by phosphorylation of CEACAM1. Interacts with APPL2 and APPL1; targets APPL2 to endosomes and acting in parallel to RAB5A. Interacts with S100A4. May interact with UBAP2. Interacts with PLEKHG4B; this interaction is required for PLEKHG4B localization to cell-cell adhesions. Interacts with FAM13A. Interacts with salivary cystatin-L2 (via loop 2) from the tick Ixodes scapularis; the interaction results in reduced activation of mouse NLRC4 inflammasome formation upon Anaplasma phagocytophilum infection. Post-translationally, ISGylated.

Its subcellular location is the secreted. It is found in the extracellular space. The protein resides in the extracellular matrix. It localises to the basement membrane. The protein localises to the melanosome. Its subcellular location is the early endosome. In terms of biological role, calcium-regulated membrane-binding protein whose affinity for calcium is greatly enhanced by anionic phospholipids. It binds two calcium ions with high affinity. May be involved in heat-stress response. Inhibits PCSK9-enhanced LDLR degradation, probably reduces PCSK9 protein levels via a translational mechanism but also competes with LDLR for binding with PCSK9. Binds to endosomes damaged by phagocytosis of particulate wear debris and participates in endosomal membrane stabilization, thereby limiting NLRP3 inflammasome activation. Required for endothelial cell surface plasmin generation and may support fibrinolytic surveillance and neoangiogenesis. Its function is as follows. (Microbial infection) Regulates the formation of the NLRC4 inflammasome triggered by Anaplasma phagocytophilum infection. Functionally, (Microbial infection) Protects against Klebsiella pneumoniae infection. Attenuates bacteria-induced pulmonary inflammation and promotes intro-abdominal pathogen clearance. Promotes anti-inflammatory responses by facilitating TLR4 internalization and translocation into early endosomal membranes; this leads to activation of TRAM-dependent endosomal signaling and release of anti-inflammatory cytokines. (Microbial infection) Promotes macrophage phagocytic efficiency towards Cryptococcus neoformans and ability to control fungal infection inside the cells. In terms of biological role, (Microbial infection) Contributes to protection against Pseudomonas aeruginosa infection by regulating autophagy via the AKT1-mTOR-ULK1/2 signaling pathway and activation of Rho GTPases via FAM13A-mediated mechanism. This chain is Annexin A2 (Anxa2), found in Mus musculus (Mouse).